The primary structure comprises 260 residues: Cytosolic Fe-S cluster assembly factor Nubp2 homolog 2 (260 aa).

14–21 (GKGGVGKS) is a binding site for ATP. The [4Fe-4S] cluster site is built by Cys-188 and Cys-191.

The protein belongs to the Mrp/NBP35 ATP-binding proteins family. NUBP2/CFD1 subfamily. In terms of assembly, heterotetramer of 2 Nubp1 and 2 Nubp2 chains. The cofactor is [4Fe-4S] cluster.

The protein resides in the cytoplasm. Its function is as follows. Component of the cytosolic iron-sulfur (Fe/S) protein assembly (CIA) machinery. Required for maturation of extramitochondrial Fe-S proteins. The Nubp1-Nubp2 heterotetramer forms a Fe-S scaffold complex, mediating the de novo assembly of an Fe-S cluster and its transfer to target apoproteins. This is Cytosolic Fe-S cluster assembly factor Nubp2 homolog 2 from Drosophila yakuba (Fruit fly).